Consider the following 329-residue polypeptide: o-succinylbenzoate synthase (329 aa).

Catalysis depends on Lys140, which acts as the Proton donor. Asp168, Glu197, and Asp220 together coordinate Mg(2+). Lys242 acts as the Proton acceptor in catalysis.

This sequence belongs to the mandelate racemase/muconate lactonizing enzyme family. MenC type 1 subfamily. The cofactor is a divalent metal cation.

The enzyme catalyses (1R,6R)-6-hydroxy-2-succinyl-cyclohexa-2,4-diene-1-carboxylate = 2-succinylbenzoate + H2O. It participates in quinol/quinone metabolism; 1,4-dihydroxy-2-naphthoate biosynthesis; 1,4-dihydroxy-2-naphthoate from chorismate: step 4/7. Its pathway is quinol/quinone metabolism; menaquinone biosynthesis. In terms of biological role, converts 2-succinyl-6-hydroxy-2,4-cyclohexadiene-1-carboxylate (SHCHC) to 2-succinylbenzoate (OSB). This is o-succinylbenzoate synthase from Haemophilus influenzae (strain ATCC 51907 / DSM 11121 / KW20 / Rd).